Here is a 481-residue protein sequence, read N- to C-terminus: Glutamyl-tRNA(Gln) amidotransferase subunit A (481 aa).

Catalysis depends on charge relay system residues K74 and S149. S173 acts as the Acyl-ester intermediate in catalysis.

The protein belongs to the amidase family. GatA subfamily. Heterotrimer of A, B and C subunits.

The enzyme catalyses L-glutamyl-tRNA(Gln) + L-glutamine + ATP + H2O = L-glutaminyl-tRNA(Gln) + L-glutamate + ADP + phosphate + H(+). Its function is as follows. Allows the formation of correctly charged Gln-tRNA(Gln) through the transamidation of misacylated Glu-tRNA(Gln) in organisms which lack glutaminyl-tRNA synthetase. The reaction takes place in the presence of glutamine and ATP through an activated gamma-phospho-Glu-tRNA(Gln). The sequence is that of Glutamyl-tRNA(Gln) amidotransferase subunit A from Francisella tularensis subsp. novicida (strain U112).